We begin with the raw amino-acid sequence, 192 residues long: MPTSSQDNRILVLGIGNILWADEGFGVRAVEEFHRRYAVPDNVTILDGGTQGLYLVNYLEEADRLIVFDAIDYGLEPGRLKLVRDDEVPRFTGAKKMSLHQTGFQEVISAADLLGRCPKHLVLIGCQPLDLEDWGGPLTPPVRDQIAPSIDLACQVLAEWGVTVSRRSAPLAESERLLANDIDHANYEMRPA.

Glutamate 23, aspartate 69, and histidine 100 together coordinate Ni(2+).

Belongs to the peptidase A31 family.

Its function is as follows. Not known. Could be involved in the processing of hydrogenase. This Bradyrhizobium diazoefficiens (strain JCM 10833 / BCRC 13528 / IAM 13628 / NBRC 14792 / USDA 110) protein is Hydrogenase expression/formation protein HupD (hupD).